The sequence spans 1057 residues: Atrial natriuretic peptide receptor 1 (1057 aa).

The signal sequence occupies residues 1–28 (MPGSRRVRPRLRALLLLPPLLLLRSGHA). Topologically, residues 29-469 (SDLTVAVVLP…CNQDHFSTLE (441 aa)) are extracellular. Asn-41 carries N-linked (GlcNAc...) asparagine glycosylation. The chloride site is built by Ser-81, Gly-113, and Cys-114. Disulfide bonds link Cys-88/Cys-114 and Cys-192/Cys-241. 5 N-linked (GlcNAc...) asparagine glycosylation sites follow: Asn-208, Asn-334, Asn-375, Asn-382, and Asn-423. Cys-451 and Cys-460 are joined by a disulfide. The helical transmembrane segment at 470-490 (VLALVGSLSLVSFLIVSFFIY) threads the bilayer. Topologically, residues 491–1057 (RKMQLEKELV…LGERGCSTRG (567 aa)) are cytoplasmic. Residues Ser-515 and Ser-525 each carry the phosphoserine modification. Residues 524–801 (GSRLTLSGRG…QIRLALRKFN (278 aa)) enclose the Protein kinase domain. Residue Thr-528 is modified to Phosphothreonine. Residues Ser-530, Ser-534, and Ser-538 each carry the phosphoserine modification. Thr-541 is subject to Phosphothreonine. Positions 872 to 1002 (TIYFSDIVGF…DTVNTASRME (131 aa)) constitute a Guanylate cyclase domain.

It belongs to the adenylyl cyclase class-4/guanylyl cyclase family. In terms of assembly, homodimer. In terms of processing, phosphorylation of the protein kinase-like domain is required for full activation by ANP.

The protein localises to the membrane. It carries out the reaction GTP = 3',5'-cyclic GMP + diphosphate. Functionally, receptor for the atrial natriuretic peptide NPPA/ANP and the brain natriuretic peptide NPPB/BNP which are potent vasoactive hormones playing a key role in cardiovascular homeostasis. Plays an essential role in the regulation of endothelial cell senescence and vascular aging. Upon activation by ANP or BNP, stimulates the production of cyclic guanosine monophosphate (cGMP) that promotes vascular tone and volume homeostasis by activation of protein kinase cGMP-dependent 1/PRKG1 and subsequently PRKAA1, thereby controlling blood pressure and maintaining cardiovascular homeostasis. This Mus musculus (Mouse) protein is Atrial natriuretic peptide receptor 1 (Npr1).